Here is a 90-residue protein sequence, read N- to C-terminus: Small ribosomal subunit protein bS16 (90 aa).

The protein belongs to the bacterial ribosomal protein bS16 family.

The sequence is that of Small ribosomal subunit protein bS16 from Lactococcus lactis subsp. cremoris (strain MG1363).